The following is a 50-amino-acid chain: Sperm protamine P1 (50 aa).

Belongs to the protamine P1 family. As to expression, testis.

Its subcellular location is the nucleus. The protein localises to the chromosome. Protamines substitute for histones in the chromatin of sperm during the haploid phase of spermatogenesis. They compact sperm DNA into a highly condensed, stable and inactive complex. This Natalus stramineus (Mexican funnel-eared bat) protein is Sperm protamine P1 (PRM1).